A 148-amino-acid polypeptide reads, in one-letter code: Large ribosomal subunit protein uL15 (148 aa).

The segment covering 1–30 (MTHSKRNTRKLRGHVSHGHGRVGKHRKHPG) has biased composition (basic residues). The disordered stretch occupies residues 1-38 (MTHSKRNTRKLRGHVSHGHGRVGKHRKHPGGRGMAGPE).

Belongs to the universal ribosomal protein uL15 family.

The sequence is that of Large ribosomal subunit protein uL15 (RPL27A) from Euplotes crassus.